The primary structure comprises 156 residues: Small ribosomal subunit protein uS7 (156 aa).

This sequence belongs to the universal ribosomal protein uS7 family. As to quaternary structure, part of the 30S ribosomal subunit. Contacts proteins S9 and S11.

In terms of biological role, one of the primary rRNA binding proteins, it binds directly to 16S rRNA where it nucleates assembly of the head domain of the 30S subunit. Is located at the subunit interface close to the decoding center, probably blocks exit of the E-site tRNA. The polypeptide is Small ribosomal subunit protein uS7 (Nitrosococcus oceani (strain ATCC 19707 / BCRC 17464 / JCM 30415 / NCIMB 11848 / C-107)).